Consider the following 505-residue polypeptide: DNA primase DnaG (505 aa).

The Toprim domain occupies 167–241; that stretch reads DAVIVVEGRA…DVDYVAFAPP (75 aa). Mg(2+)-binding residues include E173, D215, and D217. The segment at 268-410 is disordered; it reads DEPNLREAAT…PLDNEPRSIE (143 aa). A compositionally biased stretch (low complexity) spans 318–327; it reads AGVVAGGARS. Composition is skewed to acidic residues over residues 349–376 and 384–402; these read GEVDEVGEDREGDMESDSDTADINDAEF and PNLDEAADAESVEETDAPL.

It belongs to the archaeal DnaG primase family. Forms a ternary complex with MCM helicase and DNA. It depends on Mg(2+) as a cofactor.

The catalysed reaction is ssDNA + n NTP = ssDNA/pppN(pN)n-1 hybrid + (n-1) diphosphate.. RNA polymerase that catalyzes the synthesis of short RNA molecules used as primers for DNA polymerase during DNA replication. The sequence is that of DNA primase DnaG from Halorubrum lacusprofundi (strain ATCC 49239 / DSM 5036 / JCM 8891 / ACAM 34).